A 532-amino-acid polypeptide reads, in one-letter code: 4-amino-L-phenylalanyl-[CmlP-peptidyl-carrier-protein] 3-hydroxylase (532 aa).

Positions 305, 307, 309, 310, 377, and 403 each coordinate Fe cation.

It belongs to the metallo-beta-lactamase superfamily. As to quaternary structure, homodimer. Requires Fe(2+) as cofactor.

It catalyses the reaction 4-amino-L-phenylalanyl-[peptidyl-carrier protein] + AH2 + O2 = (2R)-2-(4-aminophenyl)-L-seryl-[peptidyl-carrier protein] + A + H2O. It participates in antibiotic biosynthesis. Involved in chloramphenicol biosynthesis. Catalyzes the beta-hydroxylation of 4-amino-L-phenylalanine (L-PAPA) covalently bound to CmlP to form L-p-aminophenylserine. The sequence is that of 4-amino-L-phenylalanyl-[CmlP-peptidyl-carrier-protein] 3-hydroxylase from Streptomyces venezuelae (strain ATCC 10712 / CBS 650.69 / DSM 40230 / JCM 4526 / NBRC 13096 / PD 04745).